We begin with the raw amino-acid sequence, 142 residues long: Hemoglobin subunit alpha (142 aa).

Residues 2–142 (VLSPADKTNV…VSTVLTSKYR (141 aa)) form the Globin domain. The residue at position 4 (Ser-4) is a Phosphoserine. An N6-succinyllysine modification is found at Lys-8. At Thr-9 the chain carries Phosphothreonine. N6-succinyllysine is present on Lys-12. N6-acetyllysine; alternate is present on Lys-17. The residue at position 17 (Lys-17) is an N6-succinyllysine; alternate. Position 25 is a phosphotyrosine (Tyr-25). Ser-36 bears the Phosphoserine mark. Lys-41 carries the post-translational modification N6-succinyllysine. Position 50 is a phosphoserine (Ser-50). His-59 is a binding site for O2. Residue His-88 coordinates heme b. Ser-103 is modified (phosphoserine). Thr-109 is subject to Phosphothreonine. Residues Ser-125 and Ser-132 each carry the phosphoserine modification. Phosphothreonine is present on residues Thr-135 and Thr-138. Residue Ser-139 is modified to Phosphoserine.

The protein belongs to the globin family. In terms of assembly, heterotetramer of two alpha chains and two beta chains in adult hemoglobin A (HbA); two alpha chains and two delta chains in adult hemoglobin A2 (HbA2); two alpha chains and two epsilon chains in early embryonic hemoglobin Gower-2; two alpha chains and two gamma chains in fetal hemoglobin F (HbF). As to expression, red blood cells.

In terms of biological role, involved in oxygen transport from the lung to the various peripheral tissues. Its function is as follows. Hemopressin acts as an antagonist peptide of the cannabinoid receptor CNR1. Hemopressin-binding efficiently blocks cannabinoid receptor CNR1 and subsequent signaling. The chain is Hemoglobin subunit alpha (HBA1) from Pan paniscus (Pygmy chimpanzee).